A 459-amino-acid chain; its full sequence is tRNA-guanine(15) transglycosylase (459 aa).

Aspartate 90 acts as the Nucleophile in catalysis. Substrate is bound by residues aspartate 125 and glycine 192. Positions 275, 277, and 280 each coordinate Zn(2+).

This sequence belongs to the archaeosine tRNA-ribosyltransferase family. Zn(2+) is required as a cofactor.

It carries out the reaction guanosine(15) in tRNA + 7-cyano-7-deazaguanine = 7-cyano-7-carbaguanosine(15) in tRNA + guanine. The protein operates within tRNA modification; archaeosine-tRNA biosynthesis. Exchanges the guanine residue with 7-cyano-7-deazaguanine (preQ0) at position 15 in the dihydrouridine loop (D-loop) of archaeal tRNAs. The protein is tRNA-guanine(15) transglycosylase of Methanopyrus kandleri (strain AV19 / DSM 6324 / JCM 9639 / NBRC 100938).